Here is an 89-residue protein sequence, read N- to C-terminus: MALVQERKQELVTKYKRHEKDTGSPEVQVALLTERIAYLTEHFKTHKKDHHSRRGLLKLVGQRRRLLDYLRSIDQGRYKTLIDQLGIRK.

The protein belongs to the universal ribosomal protein uS15 family. As to quaternary structure, part of the 30S ribosomal subunit. Forms a bridge to the 50S subunit in the 70S ribosome, contacting the 23S rRNA.

Functionally, one of the primary rRNA binding proteins, it binds directly to 16S rRNA where it helps nucleate assembly of the platform of the 30S subunit by binding and bridging several RNA helices of the 16S rRNA. Its function is as follows. Forms an intersubunit bridge (bridge B4) with the 23S rRNA of the 50S subunit in the ribosome. This chain is Small ribosomal subunit protein uS15, found in Anaeromyxobacter sp. (strain Fw109-5).